The chain runs to 552 residues: Dihydroxy-acid dehydratase (552 aa).

Position 78 (aspartate 78) interacts with Mg(2+). Cysteine 119 lines the [2Fe-2S] cluster pocket. Mg(2+) contacts are provided by aspartate 120 and lysine 121. At lysine 121 the chain carries N6-carboxylysine. Cysteine 191 is a binding site for [2Fe-2S] cluster. Position 442 (glutamate 442) interacts with Mg(2+). Catalysis depends on serine 468, which acts as the Proton acceptor.

Belongs to the IlvD/Edd family. Homodimer. [2Fe-2S] cluster serves as cofactor. It depends on Mg(2+) as a cofactor.

It carries out the reaction (2R)-2,3-dihydroxy-3-methylbutanoate = 3-methyl-2-oxobutanoate + H2O. The enzyme catalyses (2R,3R)-2,3-dihydroxy-3-methylpentanoate = (S)-3-methyl-2-oxopentanoate + H2O. It participates in amino-acid biosynthesis; L-isoleucine biosynthesis; L-isoleucine from 2-oxobutanoate: step 3/4. It functions in the pathway amino-acid biosynthesis; L-valine biosynthesis; L-valine from pyruvate: step 3/4. Functionally, functions in the biosynthesis of branched-chain amino acids. Catalyzes the dehydration of (2R,3R)-2,3-dihydroxy-3-methylpentanoate (2,3-dihydroxy-3-methylvalerate) into 2-oxo-3-methylpentanoate (2-oxo-3-methylvalerate) and of (2R)-2,3-dihydroxy-3-methylbutanoate (2,3-dihydroxyisovalerate) into 2-oxo-3-methylbutanoate (2-oxoisovalerate), the penultimate precursor to L-isoleucine and L-valine, respectively. The polypeptide is Dihydroxy-acid dehydratase (Clostridium botulinum (strain Eklund 17B / Type B)).